The following is a 478-amino-acid chain: Isoeugenol monooxygenase (478 aa).

His167, His218, His282, and His471 together coordinate Fe cation.

This sequence belongs to the carotenoid oxygenase family. Monomer. Fe(2+) serves as cofactor.

The catalysed reaction is (E)-isoeugenol + O2 = vanillin + acetaldehyde. Its activity is regulated as follows. Inhibited by HgCl(2), AgNO(3), CuCl(2), phenylhydrazine, 8-hydroxyquinoline, R-cycloserine and p-chloromercuribenzoic acid. Functionally, involved in isoeugenol degradation. Catalyzes the oxidative cleavage of the side chain double-bond of isoeugenol to form vanillin and acetaldehyde. The chain is Isoeugenol monooxygenase from Pseudomonas putida (Arthrobacter siderocapsulatus).